The following is a 1447-amino-acid chain: Netrin receptor DCC (1447 aa).

An N-terminal signal peptide occupies residues 1-25; that stretch reads MENSLGCVWVPKLAFVLFGASLLSA. At 26–1097 the chain is on the extracellular side; it reads HLQVTGFQIK…GSVTPQKNSN (1072 aa). Ig-like C2-type domains follow at residues 36-135, 139-229, 234-326, and 331-416; these read PFTS…AKVT, PLRF…AEVR, PGLH…AELT, and PWFL…AQLI. 2 N-linked (GlcNAc...) asparagine glycosylation sites follow: N60 and N94. Intrachain disulfides connect C61–C117, C161–C212, and C261–C310. N-linked (GlcNAc...) asparagine glycosylation is found at N299 and N318. C352 and C400 are disulfide-bonded. Fibronectin type-III domains lie at 431 to 524, 530 to 620, 625 to 718, 728 to 821, 846 to 942, and 947 to 1044; these read APRD…TQPE, PVEN…TLSD, PPQN…TPEN, QPSS…TDPT, PPVG…TYEA, and APKD…TLKV. An N-linked (GlcNAc...) asparagine glycan is attached at N478. N628 and N702 each carry an N-linked (GlcNAc...) asparagine glycan. A helical membrane pass occupies residues 1098–1122; it reads LLVITVVTVGVLTVLVVVIVAVICT. The Cytoplasmic segment spans residues 1123-1447; it reads RRSSAQQRKK…QLNAITGSAF (325 aa). Disordered regions lie at residues 1126–1153 and 1166–1220; these read SAQQ…PPDL and EKPT…MSTL. The segment covering 1129–1143 has biased composition (basic residues); the sequence is QRKKRATHSVSKRKG. A compositionally biased stretch (basic and acidic residues) spans 1144 to 1153; it reads SQKDLRPPDL. S1178 is modified (phosphoserine; by MAPK1). Positions 1179 to 1220 are enriched in polar residues; sequence PIQSCQDLTPVSHSQSETQMGSKSASHSGQDTEDAGSSMSTL. T1187 bears the Phosphothreonine; by MAPK1 mark. A Phosphoserine; by MAPK1 modification is found at S1267. 2 disordered regions span residues 1291–1329 and 1394–1419; these read RGFG…APSR and LLPV…PASV. Positions 1297-1311 are enriched in polar residues; sequence RTQSVSEGPTTQQQP.

This sequence belongs to the immunoglobulin superfamily. DCC family. As to quaternary structure, interacts with the cytoplasmic part of UNC5A, UNC5B, UNC5C and probably UNC5D. Interacts with MAPK1. Interacts with NTN1. Interacts with DSCAM. Interacts with PTK2/FAK1. Interacts with MYO10. Interacts with CBLN4; this interaction can be competed by NTN1. Interacts with SIAH1 and SIAH2. Post-translationally, ubiquitinated; mediated by SIAH1 or SIAH2 and leading to its subsequent proteasomal degradation. In terms of tissue distribution, in the embryo, expressed at high levels in the developing brain and neural tube. In the embryo, expressed in developing neurons of the telencephalic cortical plate and in developing brainstem nuclei. In adult, highly expressed in brain with very low levels found in testis, heart and thymus. Isoform C is expressed only in the embryo.

Its subcellular location is the membrane. Its function is as follows. Receptor for netrin required for axon guidance. Mediates axon attraction of neuronal growth cones in the developing nervous system upon ligand binding. Its association with UNC5 proteins may trigger signaling for axon repulsion. It also acts as a dependence receptor required for apoptosis induction when not associated with netrin ligand. Implicated as a tumor suppressor gene. The sequence is that of Netrin receptor DCC (Dcc) from Mus musculus (Mouse).